The primary structure comprises 265 residues: Glutamate racemase (265 aa).

Residues 12 to 13 (DS) and 44 to 45 (YG) contribute to the substrate site. Cys75 serves as the catalytic Proton donor/acceptor. Substrate is bound at residue 76–77 (NT). The active-site Proton donor/acceptor is the Cys186. 187–188 (TH) provides a ligand contact to substrate.

The protein belongs to the aspartate/glutamate racemases family.

It carries out the reaction L-glutamate = D-glutamate. It participates in cell wall biogenesis; peptidoglycan biosynthesis. In terms of biological role, provides the (R)-glutamate required for cell wall biosynthesis. The sequence is that of Glutamate racemase from Pseudomonas putida (strain ATCC 47054 / DSM 6125 / CFBP 8728 / NCIMB 11950 / KT2440).